The sequence spans 517 residues: MIESLIALIAAIVGLGIGYLVAKKINDAKYEIFVEQAKAKAKAIEYEAELILKDAKNSILNAELEVKKKYEEKTHKIQKDFNQKFDDLSKKEQKLQQEEEKLKEDKEYLCKSQKHIQNLQSDVDKLKNKYQEKLDDVLKILEHSTGLTQNEAKEIILKKVEENSREQIAHIVRKYEEEAKNEAKRKANFIIAQATSRFAGEFAAERLINVINIKNDELKGRIIGKEGRNVKTLEMVLGVDIIIDDTPGAIIVSCFNLYRRAIATKVIELLVEDGRIQPARIEEIHEKVCKEFDSAILEEGETIVMDLGLNKIHPEIVKLIGKLKYRASYGQNALAHSLEVAHLAGIIAAECGGDENLARRAGILHDIGKALTHDFEGSHVDLGAELCKRYKEHPVVINAIYAHHGHEEATSIESAAVCAADTLSAARPGARREVLEAFLKRVSELEDIAKSKEGIKNAYAINAGREIRVIANAQLVNDDESVLLAKEIAAEIQEKMQYPGEIKVNVIRELRAVEYAK.

A helical membrane pass occupies residues 1–21 (MIESLIALIAAIVGLGIGYLV). Residues 207–273 (LINVINIKND…TKVIELLVED (67 aa)) enclose the KH domain. The HD domain occupies 333 to 426 (ALAHSLEVAH…VCAADTLSAA (94 aa)).

It belongs to the RNase Y family.

It localises to the cell membrane. Its function is as follows. Endoribonuclease that initiates mRNA decay. This Campylobacter jejuni subsp. jejuni serotype O:23/36 (strain 81-176) protein is Ribonuclease Y.